The primary structure comprises 311 residues: Catabolite control protein B (311 aa).

Positions 1–56 constitute an HTH lacI-type domain; it reads MANIKEIARLANVSVSTVSRVLNHHPYVSEEKRKLVHQVMKELDYTPNRTAIDLIR. The H-T-H motif DNA-binding region spans 4-23; that stretch reads IKEIARLANVSVSTVSRVLN.

In terms of assembly, seems to be complexed to phosphorylated HPr.

Transcriptional regulator involved in catabolite repression of several operons. The protein is Catabolite control protein B (ccpB) of Bacillus subtilis (strain 168).